The sequence spans 454 residues: Phosphoglucosamine mutase (454 aa).

The Phosphoserine intermediate role is filled by S104. Residues S104, D244, D246, and D248 each contribute to the Mg(2+) site. Phosphoserine is present on S104.

The protein belongs to the phosphohexose mutase family. Mg(2+) serves as cofactor. In terms of processing, activated by phosphorylation.

The catalysed reaction is alpha-D-glucosamine 1-phosphate = D-glucosamine 6-phosphate. Functionally, catalyzes the conversion of glucosamine-6-phosphate to glucosamine-1-phosphate. The sequence is that of Phosphoglucosamine mutase from Lacticaseibacillus paracasei (strain ATCC 334 / BCRC 17002 / CCUG 31169 / CIP 107868 / KCTC 3260 / NRRL B-441) (Lactobacillus paracasei).